Here is a 240-residue protein sequence, read N- to C-terminus: RNA transcription, translation and transport factor protein (240 aa).

It belongs to the RTRAF family. In terms of assembly, homodimer. Component of a tRNA-splicing ligase complex.

Its subcellular location is the nucleus. The protein resides in the cytoplasm. It localises to the cytosol. The protein localises to the perinuclear region. It is found in the cytoskeleton. Its subcellular location is the microtubule organizing center. The protein resides in the centrosome. In terms of biological role, RNA-binding protein involved in modulation of mRNA transcription by Polymerase II. Component of the tRNA-splicing ligase complex. The polypeptide is RNA transcription, translation and transport factor protein (Xenopus laevis (African clawed frog)).